The primary structure comprises 344 residues: tRNA N6-adenosine threonylcarbamoyltransferase (344 aa).

His-111 and His-115 together coordinate Fe cation. Substrate-binding positions include 134-138 (LVSGG), Asp-167, Gly-180, and Asn-273. A Fe cation-binding site is contributed by Asp-301.

Belongs to the KAE1 / TsaD family. The cofactor is Fe(2+).

The protein localises to the cytoplasm. It carries out the reaction L-threonylcarbamoyladenylate + adenosine(37) in tRNA = N(6)-L-threonylcarbamoyladenosine(37) in tRNA + AMP + H(+). Required for the formation of a threonylcarbamoyl group on adenosine at position 37 (t(6)A37) in tRNAs that read codons beginning with adenine. Is involved in the transfer of the threonylcarbamoyl moiety of threonylcarbamoyl-AMP (TC-AMP) to the N6 group of A37, together with TsaE and TsaB. TsaD likely plays a direct catalytic role in this reaction. This chain is tRNA N6-adenosine threonylcarbamoyltransferase, found in Cupriavidus pinatubonensis (strain JMP 134 / LMG 1197) (Cupriavidus necator (strain JMP 134)).